We begin with the raw amino-acid sequence, 245 residues long: Small ribosomal subunit protein uS2 (245 aa).

The protein belongs to the universal ribosomal protein uS2 family.

In Pseudomonas putida (strain ATCC 47054 / DSM 6125 / CFBP 8728 / NCIMB 11950 / KT2440), this protein is Small ribosomal subunit protein uS2.